We begin with the raw amino-acid sequence, 276 residues long: MRLRFTKMHGLGNDFVMIDAISQKVTITPERARKLADRHFGVGCDQVLVVESPDNPDADFRYRIFNNDGSEVENCGNGARCFAVFVRQRQLTAKSDIVVETAAGLLRLHVLDDNQVTVNMGVPVLAPAQIPFVTPHEQPEYPLQLDNMEITISAVSMGNPHAVTLVDNLASFPVKTLGAQIETHAQFPNRVNAGFMELISRQEVKLRVFERGVGETLACGTGACAAVVSGIVRGLLDTTVAVHLPGGSLSITWEGAEKPVMMTGPAKAVFHGQVKL.

Substrate contacts are provided by asparagine 13, glutamine 46, and asparagine 66. Cysteine 75 (proton donor) is an active-site residue. Residues 76–77, asparagine 159, asparagine 192, and 210–211 contribute to the substrate site; these read GN and ER. The active-site Proton acceptor is the cysteine 219. A substrate-binding site is contributed by 220 to 221; it reads GT.

Belongs to the diaminopimelate epimerase family. Homodimer.

The protein resides in the cytoplasm. The catalysed reaction is (2S,6S)-2,6-diaminopimelate = meso-2,6-diaminopimelate. It functions in the pathway amino-acid biosynthesis; L-lysine biosynthesis via DAP pathway; DL-2,6-diaminopimelate from LL-2,6-diaminopimelate: step 1/1. In terms of biological role, catalyzes the stereoinversion of LL-2,6-diaminopimelate (L,L-DAP) to meso-diaminopimelate (meso-DAP), a precursor of L-lysine and an essential component of the bacterial peptidoglycan. This is Diaminopimelate epimerase from Teredinibacter turnerae (strain ATCC 39867 / T7901).